The primary structure comprises 242 residues: Ribosomal RNA large subunit methyltransferase E (242 aa).

Residues glycine 88, tryptophan 90, aspartate 111, aspartate 127, and aspartate 151 each contribute to the S-adenosyl-L-methionine site. The Proton acceptor role is filled by lysine 191.

This sequence belongs to the class I-like SAM-binding methyltransferase superfamily. RNA methyltransferase RlmE family.

The protein resides in the cytoplasm. It catalyses the reaction uridine(2552) in 23S rRNA + S-adenosyl-L-methionine = 2'-O-methyluridine(2552) in 23S rRNA + S-adenosyl-L-homocysteine + H(+). Its function is as follows. Specifically methylates the uridine in position 2552 of 23S rRNA at the 2'-O position of the ribose in the fully assembled 50S ribosomal subunit. This is Ribosomal RNA large subunit methyltransferase E from Bartonella tribocorum (strain CIP 105476 / IBS 506).